Here is a 72-residue protein sequence, read N- to C-terminus: Conotoxin Lt6.3 (72 aa).

An N-terminal signal peptide occupies residues 1 to 22 (MKLTSVVIVAVLFLAACQLTTS). Residues 23–46 (DGSRGTWKDRAVRSITKVSMLRWP) constitute a propeptide that is removed on maturation. 3 disulfides stabilise this stretch: C47–C61, C54–C64, and C60–C71.

The protein belongs to the conotoxin O1 superfamily. In terms of tissue distribution, expressed by the venom duct.

The protein resides in the secreted. The chain is Conotoxin Lt6.3 from Conus litteratus (Lettered cone).